Here is a 374-residue protein sequence, read N- to C-terminus: Mitochondrial import inner membrane translocase subunit tim50 (374 aa).

A mitochondrion-targeting transit peptide spans 1–48 (MILNKVAKCYGKQIGFFGNKTTQFIKPNQTIFLIGGTKRLFTTQQQQS). The interval 42–97 (TTQQQQSPKKEEPKSEQQKKVEDKTEEKEKEKDEEENENEKEKENEDGEGQKKKSK) is disordered. Basic and acidic residues-rich tracts occupy residues 49-72 (PKKE…KEKE) and 81-93 (EKEK…EGQK). A helical membrane pass occupies residues 103 to 125 (IVTSVTSTFFAGVLVASTFGYLT). The 142-residue stretch at 191–332 (PGGKKYTLVI…IELLPVLESF (142 aa)) folds into the FCP1 homology domain.

The protein belongs to the TIM50 family. Component of the mitochondrial import inner membrane translocase complex.

It localises to the mitochondrion inner membrane. Its function is as follows. Component of the mitochondrial import inner membrane translocase that mediates the translocation of transit peptide-containing proteins across the mitochondrial inner membrane. This chain is Mitochondrial import inner membrane translocase subunit tim50 (timm50), found in Dictyostelium discoideum (Social amoeba).